The primary structure comprises 101 residues: Glutenin, high molecular weight subunit PC256 (101 aa).

Over residues 1 to 27 (EKLGQGQQPRQWLQPRQGQQGYYPTSP) the composition is skewed to polar residues. Residues 1-65 (EKLGQGQQPR…QGYDSPYHVS (65 aa)) are disordered. Over residues 41–62 (QGYYPTSPQQSGQGQQGYDSPY) the composition is skewed to low complexity.

It belongs to the gliadin/glutenin family. Disulfide-bridge linked aggregates.

Glutenins are high-molecular weight seed storage proteins of wheat endosperm. Thought to be responsible for the visco-elastic property of wheat dough. This Triticum aestivum (Wheat) protein is Glutenin, high molecular weight subunit PC256.